The primary structure comprises 709 residues: Fatty acid oxidation complex subunit alpha (709 aa).

The enoyl-CoA hydratase stretch occupies residues 1–188 (MEKTFNLTRR…KMGLVNDVVP (188 aa)). The segment at 308 to 709 (RKVKKAVILG…AMAAEKARFF (402 aa)) is 3-hydroxyacyl-CoA dehydrogenase.

This sequence in the N-terminal section; belongs to the enoyl-CoA hydratase/isomerase family. In the central section; belongs to the 3-hydroxyacyl-CoA dehydrogenase family. Heterotetramer of two alpha chains (FadJ) and two beta chains (FadI).

Its subcellular location is the cytoplasm. The catalysed reaction is a (3S)-3-hydroxyacyl-CoA = a (2E)-enoyl-CoA + H2O. It catalyses the reaction a 4-saturated-(3S)-3-hydroxyacyl-CoA = a (3E)-enoyl-CoA + H2O. It carries out the reaction a (3S)-3-hydroxyacyl-CoA + NAD(+) = a 3-oxoacyl-CoA + NADH + H(+). The enzyme catalyses (3S)-3-hydroxybutanoyl-CoA = (3R)-3-hydroxybutanoyl-CoA. It participates in lipid metabolism; fatty acid beta-oxidation. Catalyzes the formation of a hydroxyacyl-CoA by addition of water on enoyl-CoA. Also exhibits 3-hydroxyacyl-CoA epimerase and 3-hydroxyacyl-CoA dehydrogenase activities. This Shewanella sp. (strain ANA-3) protein is Fatty acid oxidation complex subunit alpha.